The chain runs to 431 residues: UDP-N-acetylglucosamine 1-carboxyvinyltransferase (431 aa).

22-23 is a binding site for phosphoenolpyruvate; sequence KN. Arg93 lines the UDP-N-acetyl-alpha-D-glucosamine pocket. Catalysis depends on Cys117, which acts as the Proton donor. Cys117 is modified (2-(S-cysteinyl)pyruvic acid O-phosphothioketal). UDP-N-acetyl-alpha-D-glucosamine contacts are provided by Asp307 and Val329.

The protein belongs to the EPSP synthase family. MurA subfamily.

It is found in the cytoplasm. The enzyme catalyses phosphoenolpyruvate + UDP-N-acetyl-alpha-D-glucosamine = UDP-N-acetyl-3-O-(1-carboxyvinyl)-alpha-D-glucosamine + phosphate. It participates in cell wall biogenesis; peptidoglycan biosynthesis. In terms of biological role, cell wall formation. Adds enolpyruvyl to UDP-N-acetylglucosamine. The polypeptide is UDP-N-acetylglucosamine 1-carboxyvinyltransferase (Nitrosococcus oceani (strain ATCC 19707 / BCRC 17464 / JCM 30415 / NCIMB 11848 / C-107)).